Here is an 860-residue protein sequence, read N- to C-terminus: DNA mismatch repair protein MutS (860 aa).

618 to 625 (GPNMGGKS) is an ATP binding site.

This sequence belongs to the DNA mismatch repair MutS family.

Functionally, this protein is involved in the repair of mismatches in DNA. It is possible that it carries out the mismatch recognition step. This protein has a weak ATPase activity. This chain is DNA mismatch repair protein MutS, found in Shewanella piezotolerans (strain WP3 / JCM 13877).